A 1076-amino-acid polypeptide reads, in one-letter code: Serine/threonine-protein phosphatase 6 regulatory ankyrin repeat subunit C (1076 aa).

28 ANK repeats span residues 7–36 (TDQP…NINV), 40–69 (ERRT…NVNA), 73–102 (LWLT…DVNA), 106–135 (LWQT…SLNV), 139–168 (SGRS…SLNV), 172–201 (KERQ…DLGC), 205–234 (KGYG…EIDE), 238–267 (FGNT…NVNQ), 271–301 (KGFT…DVNY), 305–334 (EGKS…EIDC), 338–367 (FGNT…DTAR), 371–400 (HDMF…LYSI), 422–451 (LGRT…DLRR), 455–484 (FGRT…GVNE), 488–545 (KGCS…DPSL), 549–579 (QGYT…CLED), 584–613 (IPVS…NLDV), 617–646 (KGRT…SALI), 651–680 (RKWT…RADI), 687–716 (YGQT…TADA), 720–749 (RGRT…FVLC), 753–782 (KGRT…STDP), 790–819 (SGYS…FSYL), 822–852 (NPFT…KIVN), 857–886 (KGRT…EVNA), 890–920 (TGRT…DLTV), 924–953 (NKNT…DLGL), and 960–989 (ALQM…TVLA). Residues 502–514 (YRRAEPHTPSSHD) are compositionally biased toward basic and acidic residues. The disordered stretch occupies residues 502-522 (YRRAEPHTPSSHDAEEDEPLK). Phosphoserine occurs at positions 1028 and 1075.

In terms of assembly, protein phosphatase 6 (PP6) holoenzyme is proposed to be a heterotrimeric complex formed by the catalytic subunit, a SAPS domain-containing subunit (PP6R) and an ankyrin repeat-domain containing regulatory subunit (ARS). Interacts with PPP6R1.

Its function is as follows. Putative regulatory subunit of protein phosphatase 6 (PP6) that may be involved in the recognition of phosphoprotein substrates. In Homo sapiens (Human), this protein is Serine/threonine-protein phosphatase 6 regulatory ankyrin repeat subunit C (ANKRD52).